The chain runs to 119 residues: Large ribosomal subunit protein bL19 (119 aa).

It belongs to the bacterial ribosomal protein bL19 family.

Functionally, this protein is located at the 30S-50S ribosomal subunit interface and may play a role in the structure and function of the aminoacyl-tRNA binding site. The polypeptide is Large ribosomal subunit protein bL19 (Limosilactobacillus reuteri (strain DSM 20016) (Lactobacillus reuteri)).